The chain runs to 423 residues: Serine--tRNA ligase (423 aa).

T228–E230 is a binding site for L-serine. ATP is bound at residue R259–E261. Residue E282 participates in L-serine binding. E346–S349 is a binding site for ATP. S384 provides a ligand contact to L-serine.

It belongs to the class-II aminoacyl-tRNA synthetase family. Type-1 seryl-tRNA synthetase subfamily. In terms of assembly, homodimer. The tRNA molecule binds across the dimer.

Its subcellular location is the cytoplasm. It carries out the reaction tRNA(Ser) + L-serine + ATP = L-seryl-tRNA(Ser) + AMP + diphosphate + H(+). It catalyses the reaction tRNA(Sec) + L-serine + ATP = L-seryl-tRNA(Sec) + AMP + diphosphate + H(+). It functions in the pathway aminoacyl-tRNA biosynthesis; selenocysteinyl-tRNA(Sec) biosynthesis; L-seryl-tRNA(Sec) from L-serine and tRNA(Sec): step 1/1. Catalyzes the attachment of serine to tRNA(Ser). Is also able to aminoacylate tRNA(Sec) with serine, to form the misacylated tRNA L-seryl-tRNA(Sec), which will be further converted into selenocysteinyl-tRNA(Sec). The chain is Serine--tRNA ligase from Ehrlichia canis (strain Jake).